A 310-amino-acid polypeptide reads, in one-letter code: MGILSFLPVLATESDWADCKSPQPWGHMLLWTAVLFLAPVAGTPAAPPKAVLKLEPQWINVLQEDSVTLTCRGTHSPESDSIQWFHNGNLIPTHTQPSYRFKANNNDSGEYTCQTGQTSLSDPVHLTVLSEWLVLQTPHLEFQEGETIVLRCHSWKDKPLVKVTFFQNGKSKKFSRSDPNFSIPQANHSHSGDYHCTGNIGYTLYSSKPVTITVQAPSSSPMGIIVAVVTGIAVAAIVAAVVALIYCRKKRISALPGYPECREMGETLPEKPANPTNPDEADKVGAENTITYSLLMHPDALEEPDDQNRI.

A signal peptide spans 1–42 (MGILSFLPVLATESDWADCKSPQPWGHMLLWTAVLFLAPVAG). Over 43–217 (TPAAPPKAVL…KPVTITVQAP (175 aa)) the chain is Extracellular. Ig-like C2-type domains are found at residues 48-127 (PKAV…VHLT) and 131-213 (EWLV…VTIT). 2 disulfide bridges follow: cysteine 71–cysteine 113 and cysteine 152–cysteine 196. N-linked (GlcNAc...) asparagine glycosylation is found at asparagine 106, asparagine 180, and asparagine 187. A helical transmembrane segment spans residues 218–240 (SSSPMGIIVAVVTGIAVAAIVAA). Over 241 to 310 (VVALIYCRKK…LEEPDDQNRI (70 aa)) the chain is Cytoplasmic. The short motif at 290–295 (ITYSLL) is the ITIM motif element. A Phosphotyrosine; by SRC-type Tyr-kinases modification is found at tyrosine 292.

Interacts with INPP5D/SHIP1. Interacts with FGR. Interacts with LYN. In terms of assembly, (Microbial infection) Isoform IIB1 interacts with measles virus protein N. Protein N is released in the blood following lysis of measles infected cells. This interaction presumably block inflammatory immune response. In terms of processing, phosphorylated by the SRC-type Tyr-kinases LYN and BLK. Is the most broadly distributed Fc-gamma-receptor. Expressed in monocyte, neutrophils, macrophages, basophils, eosinophils, Langerhans cells, B-cells, platelets cells and placenta (endothelial cells). Not detected in natural killer cells.

Its subcellular location is the cell membrane. In terms of biological role, receptor for the Fc region of complexed or aggregated immunoglobulins gamma. Low affinity receptor. Involved in a variety of effector and regulatory functions such as phagocytosis of immune complexes and modulation of antibody production by B-cells. Binding to this receptor results in down-modulation of previous state of cell activation triggered via antigen receptors on B-cells (BCR), T-cells (TCR) or via another Fc receptor. Isoform IIB1 fails to mediate endocytosis or phagocytosis. Isoform IIB2 does not trigger phagocytosis. The polypeptide is Low affinity immunoglobulin gamma Fc region receptor II-b (FCGR2B) (Homo sapiens (Human)).